A 311-amino-acid polypeptide reads, in one-letter code: AT-hook motif nuclear-localized protein 27 (311 aa).

Positions 40–105 (HHHQHQQHQQ…KNKAKPPIIV (66 aa)) are disordered. The span at 55 to 75 (DDSRESDHSNKDHHQQGRPDS) shows a compositional bias: basic and acidic residues. Positions 86-98 (KRPRGRPPGSKNK) form a DNA-binding region, a.T hook. The region spanning 110–258 (PNALRSHVLE…EEGGGGGGGG (149 aa)) is the PPC domain. The segment at 178-183 (GRFEIL) is required for the binding to non-AHL interactors. Positions 246 to 311 (EEEEEGGGGG…GAGTPSRPPF (66 aa)) are disordered. Over residues 252 to 262 (GGGGGGGGGGP) the composition is skewed to gly residues. Over residues 263–277 (PQMQQAPSASPPSGV) the composition is skewed to low complexity. A compositionally biased stretch (gly residues) spans 278–292 (TGQGQLGGNVGGYGF).

As to quaternary structure, homodimer. Interacts with AHL12, AHL25, AHL29, TCP4, TCP13, EF114, ATAF2/NAC081, histone H2B.1, histone H3.3 and histone H4. As to expression, expressed in the hypocotyl and the vascular tissue of seedling.

It localises to the nucleus. Its function is as follows. Transcription factor that specifically binds AT-rich DNA sequences related to the nuclear matrix attachment regions (MARs). Negatively regulates plant innate immunity (PTI) to pathogens through the down-regulation of the PAMP-triggered FRK1 expression. Acts redundantly with AHL18, AHL22 and AHL29 in the regulation of flowering and regulation of the hypocotyl elongation. Acts as a chromatin remodeling factor that negatively regulates the leaf senescence. Acts redundantly with AHL29/SOB3 to modulate hypocotyl growth inhibition in response to light. The polypeptide is AT-hook motif nuclear-localized protein 27 (Arabidopsis thaliana (Mouse-ear cress)).